We begin with the raw amino-acid sequence, 338 residues long: Envelope glycoprotein K (338 aa).

The signal sequence occupies residues 1 to 30 (MLAVRSLQHLSTVVLITAYGLVLVWYTVFG). The Extracellular segment spans residues 31–121 (ASPLHRCIYA…VNCLETLWYT (91 aa)). The interval 31–121 (ASPLHRCIYA…VNCLETLWYT (91 aa)) is involved in fusion. N-linked (GlcNAc...) asparagine; by host glycans are attached at residues Asn-48 and Asn-58. A helical transmembrane segment spans residues 122 to 140 (RVRLVVVGWFLYLAFVALH). At 141–212 (QRRCMFGVVS…DPVTFLYHRP (72 aa)) the chain is on the cytoplasmic side. Residues 213 to 233 (AIGVIVGCELIVRFVAVGLIV) traverse the membrane as a helical segment. Residues 234–243 (GTAFISRGAC) lie on the Extracellular side of the membrane. A helical membrane pass occupies residues 244–264 (AITYPLFLTITTWCFVSTIGL). The Cytoplasmic portion of the chain corresponds to 265–301 (TELYCILRRGPAPKNADKAAAPGRSKGLSGVCGRCCS). The tract at residues 265–301 (TELYCILRRGPAPKNADKAAAPGRSKGLSGVCGRCCS) is interaction with UL20. Residues 302–322 (IILSGIAMRLCYIAVVAGVVL) traverse the membrane as a helical segment. The Extracellular portion of the chain corresponds to 323 to 338 (VALHYEQEIQRRLFDV).

This sequence belongs to the alphaherpesvirinae glycoprotein K family. Interacts (via UL20 interaction region) with protein UL20 (via N-terminus); this interaction probably plays a role in the coordinate transport of protein UL20 and gK to the trans-Golgi network (TGN), and is required for the cell surface expression of gK. Post-translationally, N-glycosylated.

It is found in the host cell membrane. Its subcellular location is the host endosome membrane. It localises to the host Golgi apparatus membrane. Glycoprotein that probably modulates membrane fusion events during secondary envelopment of cytoplasmic capsids that bud into specific trans-Golgi network (TGN)-derived membranes. Also plays a role, together with gB, in virus-induced cell-to-cell fusion (syncytia formation). Seems to block fusion of virions with infected-cell membranes. In Homo sapiens (Human), this protein is Envelope glycoprotein K (gK).